A 220-amino-acid polypeptide reads, in one-letter code: Iron-sulfur cluster repair protein YtfE (220 aa).

Belongs to the RIC family. YtfE subfamily. Homodimer.

Its subcellular location is the cytoplasm. Di-iron-containing protein involved in the repair of iron-sulfur clusters damaged by oxidative and nitrosative stress conditions. The protein is Iron-sulfur cluster repair protein YtfE of Escherichia coli O8 (strain IAI1).